Reading from the N-terminus, the 156-residue chain is Cell division protein SepF (156 aa).

Residues 30–49 form a disordered region; that stretch reads NAAAPSTTETSVVRQDDRPK.

Belongs to the SepF family. Homodimer. Interacts with FtsZ.

It is found in the cytoplasm. In terms of biological role, cell division protein that is part of the divisome complex and is recruited early to the Z-ring. Probably stimulates Z-ring formation, perhaps through the cross-linking of FtsZ protofilaments. Its function overlaps with FtsA. The protein is Cell division protein SepF of Exiguobacterium sp. (strain ATCC BAA-1283 / AT1b).